A 212-amino-acid chain; its full sequence is Histone H1.2 (212 aa).

The segment covering 1–17 has biased composition (low complexity); that stretch reads MSEAAPAAPAAAPPAEK. A disordered region spans residues 1-41; sequence MSEAAPAAPAAAPPAEKAPAKKKAAKKPAGVRRKASGPPVS. The residue at position 2 (Ser-2) is an N-acetylserine. The residue at position 2 (Ser-2) is a Phosphoserine. Lys-17 bears the N6-acetyllysine mark. The span at 20-35 shows a compositional bias: basic residues; it reads AKKKAAKKPAGVRRKA. Residues Lys-23, Lys-26, and Lys-27 each carry the N6-(2-hydroxyisobutyryl)lysine modification. Position 34 is an N6-(beta-hydroxybutyryl)lysine; alternate (Lys-34). An N6-crotonyllysine; alternate modification is found at Lys-34. Lys-34 bears the N6-methyllysine; alternate mark. Residues 36–109 form the H15 domain; it reads SGPPVSELIT…GASGSFKLNK (74 aa). Lys-46 carries the N6-(2-hydroxyisobutyryl)lysine modification. Position 52 is an N6-(beta-hydroxybutyryl)lysine; alternate (Lys-52). Lys-52 carries the N6-(2-hydroxyisobutyryl)lysine; alternate modification. Arg-54 carries the citrulline modification. Position 63 is an N6-(2-hydroxyisobutyryl)lysine (Lys-63). An N6-(beta-hydroxybutyryl)lysine; alternate modification is found at Lys-64. Lys-64 is subject to N6-crotonyllysine; alternate. An N6-(2-hydroxyisobutyryl)lysine; alternate modification is found at Lys-64. Lys-75 and Lys-81 each carry N6-(2-hydroxyisobutyryl)lysine. 2 positions are modified to N6-(beta-hydroxybutyryl)lysine; alternate: Lys-85 and Lys-90. 3 positions are modified to N6-crotonyllysine; alternate: Lys-85, Lys-90, and Lys-97. An N6-(2-hydroxyisobutyryl)lysine; alternate mark is found at Lys-85, Lys-90, and Lys-97. Lys-97 is subject to N6-succinyllysine; alternate. A disordered region spans residues 98–212; it reads GTGASGSFKL…KAKKVAAKKK (115 aa). Residue Ser-104 is modified to Phosphoserine; by PKC. N6-(beta-hydroxybutyryl)lysine is present on Lys-106. Lys-110, Lys-117, Lys-121, Lys-129, and Lys-136 each carry N6-(2-hydroxyisobutyryl)lysine. Residues 121-148 are compositionally biased toward low complexity; sequence KKAGAAKAKKPAGAAKKPKKATGAATPK. Thr-146 carries the post-translational modification Phosphothreonine. Lys-148 carries the post-translational modification N6-(2-hydroxyisobutyryl)lysine. Over residues 149 to 160 the composition is skewed to basic residues; it reads KAAKKTPKKAKK. Residues Lys-159 and Lys-168 each carry the N6-crotonyllysine; alternate modification. 2 positions are modified to N6-(2-hydroxyisobutyryl)lysine; alternate: Lys-159 and Lys-168. Over residues 169–212 the composition is skewed to basic residues; it reads KVAKSPKKAKVTKPKKVKSASKAVKPKAAKPKVAKAKKVAAKKK. At Lys-186 the chain carries N6-methyllysine; by EHMT1 and EHMT2. Ser-187 is subject to ADP-ribosylserine. N6-(2-hydroxyisobutyryl)lysine is present on Lys-212.

This sequence belongs to the histone H1/H5 family. In terms of assembly, interacts with TSC22D1 isoform 2. In terms of processing, H1 histones are progressively phosphorylated during the cell cycle, becoming maximally phosphorylated during late G2 phase and M phase, and being dephosphorylated sharply thereafter. Post-translationally, crotonylation (Kcr) is specifically present in male germ cells and marks testis-specific genes in post-meiotic cells, including X-linked genes that escape sex chromosome inactivation in haploid cells. Crotonylation marks active promoters and enhancers and confers resistance to transcriptional repressors. It is also associated with post-meiotically activated genes on autosomes. ADP-ribosylated on Ser-187 in response to DNA damage. In terms of processing, citrullination at Arg-54 (H1R54ci) by PADI4 takes place within the DNA-binding site of H1 and results in its displacement from chromatin and global chromatin decondensation, thereby promoting pluripotency and stem cell maintenance. Post-translationally, hydroxybutyrylation of histones is induced by starvation.

The protein resides in the nucleus. The protein localises to the chromosome. Histone H1 protein binds to linker DNA between nucleosomes forming the macromolecular structure known as the chromatin fiber. Histones H1 are necessary for the condensation of nucleosome chains into higher-order structured fibers. Also acts as a regulator of individual gene transcription through chromatin remodeling, nucleosome spacing and DNA methylation. The polypeptide is Histone H1.2 (Mus musculus (Mouse)).